The primary structure comprises 85 residues: LYR motif-containing protein 5A (85 aa).

Belongs to the complex I LYR family.

The chain is LYR motif-containing protein 5A (lyrm5a) from Danio rerio (Zebrafish).